The chain runs to 493 residues: Glutamyl-tRNA(Gln) amidotransferase subunit A (493 aa).

Residues lysine 79 and serine 159 each act as charge relay system in the active site. Serine 183 (acyl-ester intermediate) is an active-site residue.

It belongs to the amidase family. GatA subfamily. As to quaternary structure, heterotrimer of A, B and C subunits.

The catalysed reaction is L-glutamyl-tRNA(Gln) + L-glutamine + ATP + H2O = L-glutaminyl-tRNA(Gln) + L-glutamate + ADP + phosphate + H(+). Allows the formation of correctly charged Gln-tRNA(Gln) through the transamidation of misacylated Glu-tRNA(Gln) in organisms which lack glutaminyl-tRNA synthetase. The reaction takes place in the presence of glutamine and ATP through an activated gamma-phospho-Glu-tRNA(Gln). In Brucella ovis (strain ATCC 25840 / 63/290 / NCTC 10512), this protein is Glutamyl-tRNA(Gln) amidotransferase subunit A.